A 478-amino-acid chain; its full sequence is ATP synthase subunit beta (478 aa).

163–170 is a binding site for ATP; that stretch reads GGAGVGKT.

The protein belongs to the ATPase alpha/beta chains family. F-type ATPases have 2 components, CF(1) - the catalytic core - and CF(0) - the membrane proton channel. CF(1) has five subunits: alpha(3), beta(3), gamma(1), delta(1), epsilon(1). CF(0) has three main subunits: a(1), b(2) and c(9-12). The alpha and beta chains form an alternating ring which encloses part of the gamma chain. CF(1) is attached to CF(0) by a central stalk formed by the gamma and epsilon chains, while a peripheral stalk is formed by the delta and b chains.

It is found in the cell inner membrane. It catalyses the reaction ATP + H2O + 4 H(+)(in) = ADP + phosphate + 5 H(+)(out). Produces ATP from ADP in the presence of a proton gradient across the membrane. The catalytic sites are hosted primarily by the beta subunits. The protein is ATP synthase subunit beta of Aquifex pyrophilus.